Reading from the N-terminus, the 131-residue chain is Snaclec A13 (131 aa).

Cystine bridges form between cysteine 4-cysteine 15, cysteine 32-cysteine 125, and cysteine 100-cysteine 117. Residues tyrosine 11–methionine 126 form the C-type lectin domain.

The protein belongs to the snaclec family. In terms of assembly, heterodimer; disulfide-linked. As to expression, expressed by the venom gland.

It localises to the secreted. Functionally, interferes with one step of hemostasis (modulation of platelet aggregation, or coagulation cascade, for example). The protein is Snaclec A13 of Macrovipera lebetinus (Levantine viper).